The primary structure comprises 359 residues: Archaemetzincin-2 (359 aa).

His-254 provides a ligand contact to Zn(2+). Glu-255 functions as the Proton acceptor in the catalytic mechanism. Zn(2+)-binding residues include His-258, His-264, Cys-265, Cys-270, Cys-289, and Cys-292.

It belongs to the peptidase M54 family. Zn(2+) serves as cofactor.

In terms of biological role, probable zinc metalloprotease. The sequence is that of Archaemetzincin-2 (Amz2) from Rattus norvegicus (Rat).